Consider the following 332-residue polypeptide: Trace amine-associated receptor 1 (332 aa).

Over 1 to 23 (MHLCHAITNISHRNSDWSREVQA) the chain is Extracellular. N9 carries an N-linked (GlcNAc...) asparagine glycan. Residues 24–48 (SLYSLMSLIILATLVGNLIVIISIS) form a helical membrane-spanning segment. Topologically, residues 49 to 58 (HFKQLHTPTN) are cytoplasmic. The chain crosses the membrane as a helical span at residues 59 to 80 (WLLHSMAIVDFLLGCLIMPCSM). The Extracellular portion of the chain corresponds to 81 to 95 (VRTVERCWYFGEILC). Residues C95 and C181 are joined by a disulfide bond. A helical transmembrane segment spans residues 96 to 118 (KVHTSTDIMLSSASIFHLAFISI). Residue D102 participates in 2-phenylethylamine binding. Residues 119-138 (DRYCAVCDPLRYKAKINIST) are Cytoplasmic-facing. Residues 139–160 (ILVMILVSWSLPAVYAFGMIFL) form a helical membrane-spanning segment. Residues 161 to 187 (ELNLKGVEELYRSQVSDLGGCSPFFSK) lie on the Extracellular side of the membrane. An extracellular Loop 2 (ECL2) region spans residues 174–185 (QVSDLGGCSPFF). The chain crosses the membrane as a helical span at residues 188 to 210 (VSGVLAFMTSFYIPGSVMLFVYY). The Cytoplasmic segment spans residues 211 to 246 (RIYFIAKGQARSINRTNVQVGLEGKSQAPQSKETKA). The helical transmembrane segment at 247-270 (AKTLGIMVGVFLVCWCPFFLCTVL) threads the bilayer. Residues 271–283 (DPFLGYVIPPSLN) lie on the Extracellular side of the membrane. The chain crosses the membrane as a helical span at residues 284–304 (DALYWFGYLNSALNPMVYAFF). Residues 305–332 (YPWFRRALKMVLLGKIFQKDSSRSKLFL) are Cytoplasmic-facing.

The protein belongs to the G-protein coupled receptor 1 family. In terms of tissue distribution, widely distributed throughout the brain. Strongly expressed in the mitral cell layer of the olfactory bulb, piriform cortex, the arcuate, motor, and mesencephalic trigeminal nuclei, lateral reticular and hypoglossal nuclei, cerebellar Purkinje cells, and ventral horn of the spinal cord. Moderately expressed in the frontal, entorhinal, and agranular cortices, the ventral pallidum, thalamus, hippocampus, several hypothalamic nuclei, ambiguus, dorsal raphe, and gigantocellular reticular nuclei. Weakly expressed in the septum, basal ganglia, amygdala, myelencephalon, and spinal cord dorsal horn. Particularly interesting is the moderate expression in several monoaminergic cell groups, namely the dorsal raphe, the locus coeruleus, and the ventral tegmental area.

Its subcellular location is the endomembrane system. It is found in the endoplasmic reticulum membrane. The protein resides in the cell membrane. Its activity is regulated as follows. Activated by SEP-363856 small molecule: IHCH-7179 acts both as an agonist activator for HTR1A and TAAR1. In terms of biological role, intracellular G-protein coupled receptor for trace amines, which recognizes endogenous amine-containing metabolites such as beta-phenylethylamine (beta-PEA), 3-iodothyronamine (T1AM), isoamylamine (IAA), cadaverine (CAD), cyclohexylamine (CHA), p-tyramine (p-TYR), trimethylamine (TMA), octopamine and tryptamine. Also functions as a receptor for various drugs and psychoactive substances, such as amphetamine and methamphetamine. Unresponsive to classical biogenic amines, such as epinephrine and histamine and only partially activated by dopamine and serotonin. Expressed in both the central and peripheral nervous system: TAAR1 activation regulates the activity of several neurotransmitter signaling pathways by (1) decreasing the basal firing rates of the neurons involved and by (2) lowering the sensitivity of receptors to neurotransmitters. Ligand binding causes a conformation change that triggers signaling via guanine nucleotide-binding proteins (G proteins) and modulates the activity of downstream effectors. TAAR1 is coupled with different G(i)/G(o)-, G(s)- or G(q)/G(11) classes of G alpha proteins depending on the ligand. CAD-binding is coupled to G(i)/G(o) G alpha proteins and mediates inhibition of adenylate cyclase activity. T1AM- or beta-PEA-binding is coupled to G(s) G alpha proteins and mediates activation of adenylate cyclase activity. CHA- or IAA-binding is coupled to G(q)/G(11) G alpha proteins and activates phospholipase C-beta, releasing diacylglycerol (DAG) and inositol 1,4,5-trisphosphate (IP3) second messengers. TMA-binding is coupled with all three G(i)/G(o)-, G(s)- or G(q)/G(11) G alpha protein subtypes. The chain is Trace amine-associated receptor 1 from Mus musculus (Mouse).